The sequence spans 224 residues: Cytidylate kinase (224 aa).

10-18 provides a ligand contact to ATP; the sequence is GPASAGKST.

This sequence belongs to the cytidylate kinase family. Type 1 subfamily.

Its subcellular location is the cytoplasm. It carries out the reaction CMP + ATP = CDP + ADP. The catalysed reaction is dCMP + ATP = dCDP + ADP. The protein is Cytidylate kinase of Leuconostoc mesenteroides subsp. mesenteroides (strain ATCC 8293 / DSM 20343 / BCRC 11652 / CCM 1803 / JCM 6124 / NCDO 523 / NBRC 100496 / NCIMB 8023 / NCTC 12954 / NRRL B-1118 / 37Y).